An 894-amino-acid polypeptide reads, in one-letter code: MAEQLRFDGQVVVVTGAGGGLGKAYCLFFGSRGASVVVNDLGASFKGEGNSTKAADVVVNEIKAAGGKAVANYDSVENGDKIIETAIKEFGRIDILINNAGILRDISFKNMKDEDWDLIFKVHVKGSYKTARAAWPYFRKQKFGRVINTASAAGLFGNFGQANYSAAKLGMVGFTETLAKEGLKYNIISNVIAPIAASRMTETVMPPDLLALMKPEWVVPLVAVLVHKNNTSETGSIFEVGGGHVAKLRWERSSGLLLKADESYTPGAIIKKWDQVTDFSNPQYPTGPNDFLALLEESLKLGPNDPGEKVDFKGRVALVTGGGAGIGRAYCLAFARAGASVVVNDLVNPDDVVNEIKKMGGKAVGAKFSAEDGDAVVKAAIDAFGRVDIVVNNAGILRDKAFHNMDDSLWDPVMNVHARGTYKVTKAAWPYFLKQKYGRVLNTTSTSGIYGNFGQANYSAAKCAILGFSRAIALEGAKYNIYVNTIAPNAGTAMTKTILPEELVQAFKPDYVAPLVLALCSDKVPKKPTGGLYEVGSGWCGQTRWQRSGGHGFPVDVPLTPEEVVKHWNDIVTFDSRADHPEKASDSIEKIMANMENRVGEGKSGAAENEHLAAIKKFTGVEGKGTEYTFTERDVCLYNLGIGAKRTDIKYIFEGNEDFEVVPTFGVIPPFNTEMPFSFDDIVPNFSPMMLLHGEQYLEVRKYPIPTSGRLVSKGKLLEVVDKGSAAIVKQGITTFNAETGEELFYNEMTVFLRGCGGFGGQKKPADRGASTAANKPPARSPDAVVEVQTTEEQAAIYRLSGDYNPLHVDPAFAKVGGFKVPILHGLCSFGIAGKAVYEKYGKFKNIKVRFAGTVNPGQTLVTEMWKEGNKVVFQTKVKETGKLAISGAAAELA.

Short-chain dehydrogenase like regions lie at residues 6 to 230 and 311 to 523; these read RFDG…HKNN and DFKG…CSDK. NADP(+) is bound by residues Val-14, Lys-53, Asn-99, Arg-132, Tyr-164, Lys-168, and Ala-197. The active-site Proton acceptor is the Tyr-164. Lys-168 serves as the catalytic Lowers pKa of active site Tyr. Tyr-458 functions as the Proton acceptor in the catalytic mechanism. The (3R)-3-hydroxydecanoyl-CoA site is built by His-693, Gly-694, and Lys-723. The disordered stretch occupies residues 763–782; the sequence is KKPADRGASTAANKPPARSP. The MaoC-like domain maps to 776–887; the sequence is KPPARSPDAV…VKETGKLAIS (112 aa). The (3R)-3-hydroxydecanoyl-CoA site is built by Asp-803, Asn-805, Gly-826, Phe-851, and Gly-853.

Belongs to the short-chain dehydrogenases/reductases (SDR) family. Monomer.

The protein localises to the peroxisome. It carries out the reaction a (3R)-3-hydroxyacyl-CoA = a (2E)-enoyl-CoA + H2O. The enzyme catalyses a (3R)-3-hydroxyacyl-CoA + NAD(+) = a 3-oxoacyl-CoA + NADH + H(+). The protein operates within lipid metabolism; fatty acid beta-oxidation. Second trifunctional enzyme acting on the beta-oxidation pathway for fatty acids, possessing hydratase-dehydrogenase-epimerase activities. Converts trans-2-enoyl-CoA via D-3-hydroxyacyl-CoA to 3-ketoacyl-CoA. In Neurospora crassa (strain ATCC 24698 / 74-OR23-1A / CBS 708.71 / DSM 1257 / FGSC 987), this protein is Peroxisomal hydratase-dehydrogenase-epimerase (fox-2).